The primary structure comprises 259 residues: UPF0246 protein Pmen_1032 (259 aa).

Belongs to the UPF0246 family.

In Ectopseudomonas mendocina (strain ymp) (Pseudomonas mendocina), this protein is UPF0246 protein Pmen_1032.